A 362-amino-acid polypeptide reads, in one-letter code: MGTLATRAACHGAHLALALLLLLSLSGPWLSAVVPGTPPLFNVSLDAAPEQRWLPMLRHYDPDFLRTAVAQVIGDRVPQWVLGMVGEIVSKVESFLPQPFTDEIRSICDSLNLSLADGILVNLAYEASAFCTSIVAQDSQGHIYHGRNLDYPFGKILRKLTANVQFIKNGQIAFTGTTFVGYVGLWTGQSPHKFTISGDERDKGWWWENMIAALSLGHSPISWLIRKTLSESESFEAAVYTLAKTPLIADVYYIVGGTSPKEGVVITRDRGGPADIWPLDPLNGEWFRVETNYDHWKPAPKVDDRRTPAIKALNATGQAHLNLETLFQVLSLFPVYNNYTIYTTVMSAAEPDKYLTMIRNPS.

An N-terminal signal peptide occupies residues 1–33 (MGTLATRAACHGAHLALALLLLLSLSGPWLSAV). Residues Asn42 and Asn112 are each glycosylated (N-linked (GlcNAc...) asparagine). Cys131 acts as the Nucleophile in catalysis. N-linked (GlcNAc...) asparagine glycosylation is found at Asn314 and Asn338.

Belongs to the acid ceramidase family. Heterodimer of an alpha and a beta subunit, produced by autocatalytic cleavage. N-glycosylated. Tunicamycin treatment causes a reduction in specific activity against N-palmitoylethanolamine. In terms of processing, autoproteolytic cleavage at pH 4.5 gives rise to the alpha and beta subunit. Cleavage gives rise to a conformation change that activates the enzyme. The same catalytic Cys residue mediates the autoproteolytic cleavage and subsequent hydrolysis of lipid substrates.

It localises to the lysosome. The protein localises to the membrane. It catalyses the reaction N-hexadecanoylethanolamine + H2O = ethanolamine + hexadecanoate. It carries out the reaction an N-(long-chain fatty acyl)ethanolamine + H2O = a long-chain fatty acid + ethanolamine. The enzyme catalyses N-dodecanoylethanolamine + H2O = dodecanoate + ethanolamine. The catalysed reaction is N-tetradecanoylethanolamine + H2O = tetradecanoate + ethanolamine. It catalyses the reaction an N-acylsphing-4-enine + H2O = sphing-4-enine + a fatty acid. It carries out the reaction N-hexadecanoylsphing-4-enine + H2O = sphing-4-enine + hexadecanoate. The enzyme catalyses N-dodecanoylsphing-4-enine + H2O = dodecanoate + sphing-4-enine. The protein operates within lipid metabolism; fatty acid metabolism. Functionally, degrades bioactive fatty acid amides to their corresponding acids, with the following preference: N-palmitoylethanolamine &gt; N-myristoylethanolamine &gt; N-stearoylethanolamine &gt; N-oleoylethanolamine &gt; N-linoleoylethanolamine &gt; N-arachidonoylethanolamine. This is N-acylethanolamine-hydrolyzing acid amidase from Mus musculus (Mouse).